The chain runs to 473 residues: Cysteine protease ATG4A (473 aa).

Positions 1–33 are disordered; that stretch reads MTSLPGRGVSPSSSDPLCEGNAAPSSSSSGQDL. The Nucleophile role is filled by cysteine 160. Catalysis depends on residues aspartate 357 and histidine 359.

This sequence belongs to the peptidase C54 family. As to quaternary structure, interacts with ATG8.

The protein resides in the cytoplasm. The catalysed reaction is [protein]-C-terminal L-amino acid-glycyl-phosphatidylethanolamide + H2O = [protein]-C-terminal L-amino acid-glycine + a 1,2-diacyl-sn-glycero-3-phosphoethanolamine. In terms of biological role, cysteine protease that plays a key role in autophagy by mediating both proteolytic activation and delipidation of ATG8 family proteins. The protease activity is required for proteolytic activation of ATG8 family proteins: cleaves the C-terminal amino acid of ATG8 proteins to reveal a C-terminal glycine. Exposure of the glycine at the C-terminus is essential for ATG8 proteins conjugation to phosphatidylethanolamine (PE) and insertion to membranes, which is necessary for autophagy. In addition to the protease activity, also mediates delipidation of PE-conjugated ATG8 proteins. This Oryza sativa subsp. indica (Rice) protein is Cysteine protease ATG4A (ATG4A).